The following is a 94-amino-acid chain: Pyrimidine/purine nucleoside phosphorylase (94 aa).

Belongs to the nucleoside phosphorylase PpnP family.

The enzyme catalyses a purine D-ribonucleoside + phosphate = a purine nucleobase + alpha-D-ribose 1-phosphate. It carries out the reaction adenosine + phosphate = alpha-D-ribose 1-phosphate + adenine. It catalyses the reaction cytidine + phosphate = cytosine + alpha-D-ribose 1-phosphate. The catalysed reaction is guanosine + phosphate = alpha-D-ribose 1-phosphate + guanine. The enzyme catalyses inosine + phosphate = alpha-D-ribose 1-phosphate + hypoxanthine. It carries out the reaction thymidine + phosphate = 2-deoxy-alpha-D-ribose 1-phosphate + thymine. It catalyses the reaction uridine + phosphate = alpha-D-ribose 1-phosphate + uracil. The catalysed reaction is xanthosine + phosphate = alpha-D-ribose 1-phosphate + xanthine. Its function is as follows. Catalyzes the phosphorolysis of diverse nucleosides, yielding D-ribose 1-phosphate and the respective free bases. Can use uridine, adenosine, guanosine, cytidine, thymidine, inosine and xanthosine as substrates. Also catalyzes the reverse reactions. This chain is Pyrimidine/purine nucleoside phosphorylase, found in Shigella dysenteriae serotype 1 (strain Sd197).